The primary structure comprises 144 residues: Large ribosomal subunit protein uL15 (144 aa).

Residues 1 to 52 (MRLNSLSPAEGAKHSAKRLGRGIGSGLGKTGGRGHKGQKSRTGGGVRRGFEG) are disordered. A compositionally biased stretch (gly residues) spans 21-31 (RGIGSGLGKTG).

It belongs to the universal ribosomal protein uL15 family. In terms of assembly, part of the 50S ribosomal subunit.

Functionally, binds to the 23S rRNA. The sequence is that of Large ribosomal subunit protein uL15 from Haemophilus ducreyi (strain 35000HP / ATCC 700724).